The primary structure comprises 269 residues: Tryptophan synthase alpha chain (269 aa).

Catalysis depends on proton acceptor residues Glu-50 and Asp-61.

The protein belongs to the TrpA family. In terms of assembly, tetramer of two alpha and two beta chains.

The enzyme catalyses (1S,2R)-1-C-(indol-3-yl)glycerol 3-phosphate + L-serine = D-glyceraldehyde 3-phosphate + L-tryptophan + H2O. It participates in amino-acid biosynthesis; L-tryptophan biosynthesis; L-tryptophan from chorismate: step 5/5. In terms of biological role, the alpha subunit is responsible for the aldol cleavage of indoleglycerol phosphate to indole and glyceraldehyde 3-phosphate. This is Tryptophan synthase alpha chain from Francisella tularensis subsp. holarctica (strain FTNF002-00 / FTA).